The primary structure comprises 412 residues: G-protein coupled receptor homolog UL33 (412 aa).

The Virion surface portion of the chain corresponds to 1 to 35 (MDTIIHNTTNRSTDTPHVNITCNITEPLSAIRTTE). 3 N-linked (GlcNAc...) asparagine; by host glycosylation sites follow: Asn7, Asn19, and Asn23. The chain crosses the membrane as a helical span at residues 36 to 56 (AVINTFIIFVGGPLNAIVLIT). Topologically, residues 57-80 (QLLTNRVLGYSTPTIYMTNLYSTN) are intravirion. The chain crosses the membrane as a helical span at residues 81–101 (FLTLTVLPFIVLSNQWLLPAS). At 102-106 (VASCK) the chain is on the virion surface side. Cys105 and Cys188 are oxidised to a cystine. A helical transmembrane segment spans residues 107 to 127 (FLSVIYYSSCTVGFATVALIA). Residues 128-147 (ADRYRVLHKRTYARQSYRST) are Intravirion-facing. The chain crosses the membrane as a helical span at residues 148–168 (YIILLLTWFAGLIFSMPAAVY). Over 169-206 (TTVVIHNGTNGQSSNGHATCVLYFIADEVYTVLLSWKV) the chain is Virion surface. A helical transmembrane segment spans residues 207–227 (LLTLVWGAAPVIMMTWFYAFF). The Intravirion segment spans residues 228–244 (YSTVQRASQKQRSRTLT). A helical transmembrane segment spans residues 245–265 (FVSVLLISFVALQTPYVSIMI). Topologically, residues 266-292 (FNSYATAAWPMDCEHLTLRRTIGTLSR) are virion surface. Residues 293 to 313 (LVPHLHCLINPILYALLGHDF) form a helical membrane-spanning segment. The Intravirion portion of the chain corresponds to 314–412 (LQRMRQCFRG…SQSHHNLSGV (99 aa)). The tract at residues 377-412 (NFPSGTWKGGQKTASNDTSTKIPHRLSQSHHNLSGV) is disordered. Polar residues predominate over residues 388–397 (KTASNDTSTK).

This sequence belongs to the G-protein coupled receptor 1 family. Heterodimerizes with US28.

It is found in the virion. Its subcellular location is the host cell membrane. It localises to the host cytoplasm. Functionally, G-protein-coupled receptor (vGPCR) that constitutively activates multiple oncogenic signaling pathways including STAT3, AP-1, phospholipase C, NF-kappa-B or cAMP-responsive element (CRE) pathways. Plays an important role in viral reactivation from latency through activation of host CREB1, facilitating its recruitment to the viral major immediate early (MIE) genes. In turn, expression of the MIE-driven genes such as UL123 are de-repressed. Also facilitates virus dissemination via the extracellular and cell-to-cell route. The sequence is that of G-protein coupled receptor homolog UL33 (UL33) from Human cytomegalovirus (strain Merlin) (HHV-5).